Here is a 411-residue protein sequence, read N- to C-terminus: Dual-specificity RNA methyltransferase RlmN (411 aa).

Glutamate 125 acts as the Proton acceptor in catalysis. The region spanning 131-380 is the Radical SAM core domain; the sequence is EEGRGTLCVS…IRTPRGRDIL (250 aa). Cysteine 138 and cysteine 383 are joined by a disulfide. Cysteine 145, cysteine 149, and cysteine 152 together coordinate [4Fe-4S] cluster. Residues 209-210, serine 241, 263-265, and asparagine 340 each bind S-adenosyl-L-methionine; these read GE and SLH. The active-site S-methylcysteine intermediate is the cysteine 383.

Belongs to the radical SAM superfamily. RlmN family. [4Fe-4S] cluster serves as cofactor.

Its subcellular location is the cytoplasm. It catalyses the reaction adenosine(2503) in 23S rRNA + 2 reduced [2Fe-2S]-[ferredoxin] + 2 S-adenosyl-L-methionine = 2-methyladenosine(2503) in 23S rRNA + 5'-deoxyadenosine + L-methionine + 2 oxidized [2Fe-2S]-[ferredoxin] + S-adenosyl-L-homocysteine. The catalysed reaction is adenosine(37) in tRNA + 2 reduced [2Fe-2S]-[ferredoxin] + 2 S-adenosyl-L-methionine = 2-methyladenosine(37) in tRNA + 5'-deoxyadenosine + L-methionine + 2 oxidized [2Fe-2S]-[ferredoxin] + S-adenosyl-L-homocysteine. In terms of biological role, specifically methylates position 2 of adenine 2503 in 23S rRNA and position 2 of adenine 37 in tRNAs. m2A2503 modification seems to play a crucial role in the proofreading step occurring at the peptidyl transferase center and thus would serve to optimize ribosomal fidelity. This Brucella anthropi (strain ATCC 49188 / DSM 6882 / CCUG 24695 / JCM 21032 / LMG 3331 / NBRC 15819 / NCTC 12168 / Alc 37) (Ochrobactrum anthropi) protein is Dual-specificity RNA methyltransferase RlmN.